The chain runs to 406 residues: Dematin (406 aa).

Disordered regions lie at residues 1-30 (MERL…PSSI) and 78-333 (LPRS…DRGN). Residues 11–29 (SPGSVSSSRDSSVPGSPSS) are compositionally biased toward low complexity. 10 positions are modified to phosphoserine: serine 16, serine 18, serine 26, serine 92, serine 96, serine 105, serine 110, serine 113, serine 157, and serine 227. Over residues 105–114 (SPGTISQASA) the composition is skewed to polar residues. Positions 217–228 (EEEEEEEDDDSG) are enriched in acidic residues. The segment at 225 to 309 (DDSGEEMKAL…SRLQSTDFSP (85 aa)) is interaction with RASGRF2. Composition is skewed to basic and acidic residues over residues 229–243 (EEMK…EELS) and 253–262 (ILKEEMEKSL). Serine 270, serine 280, serine 290, serine 304, serine 316, serine 334, serine 373, and serine 384 each carry phosphoserine. Residues 282-323 (HAGTSKSSSLPAYGRTTLSRLQSTDFSPSGSEAESPGLQNGE) show a composition bias toward polar residues. Positions 338–406 (VLEQKIYPYE…NELKKKASLF (69 aa)) constitute an HP domain. Position 404 is a phosphoserine; by PKA (serine 404).

Belongs to the villin/gelsolin family. In terms of assembly, monomeric; under reducing conditions. Self-associates. Exists under oxidizing condition as a trimer linked by disulfide bonds. Found in a complex with DMTN, F-actin and spectrin. Found in a complex with ADD2, DMTN and SLC2A1. Interacts with F-actin, ITPKB and spectrin. Interacts with SLC2A1 (via C-terminus cytoplasmic region). Interacts with RASGRF2. Phosphorylated. Phosphorylation at Ser-404 by PKA causes the C-terminal headpiece domain to associate with the N-terminal core domain, and leads to the inhibition of its actin bundling activity.

It localises to the cytoplasm. It is found in the cytosol. Its subcellular location is the perinuclear region. The protein resides in the cytoskeleton. The protein localises to the cell membrane. It localises to the membrane. It is found in the endomembrane system. Its subcellular location is the cell projection. Its function is as follows. Membrane-cytoskeleton-associated protein with F-actin-binding activity that induces F-actin bundles formation and stabilization. Its F-actin-bundling activity is reversibly regulated upon its phosphorylation by the cAMP-dependent protein kinase A (PKA). Binds to the erythrocyte membrane glucose transporter-1 SLC2A1/GLUT1, and hence stabilizes and attaches the spectrin-actin network to the erythrocytic plasma membrane. Plays a role in maintaining the functional integrity of PKA-activated erythrocyte shape and the membrane mechanical properties. Also plays a role as a modulator of actin dynamics in fibroblasts; acts as a negative regulator of the RhoA activation pathway. In platelets, functions as a regulator of internal calcium mobilization across the dense tubular system that affects platelet granule secretion pathways and aggregation. Also required for the formation of a diverse set of cell protrusions, such as filopodia and lamellipodia, necessary for platelet cell spreading, motility and migration. Acts as a tumor suppressor and inhibits malignant cell transformation. The sequence is that of Dematin (DMTN) from Bos taurus (Bovine).